The chain runs to 287 residues: Bifunctional protein FolD (287 aa).

NADP(+) contacts are provided by residues 165-167 (GRS), S190, and I231.

Belongs to the tetrahydrofolate dehydrogenase/cyclohydrolase family. In terms of assembly, homodimer.

The catalysed reaction is (6R)-5,10-methylene-5,6,7,8-tetrahydrofolate + NADP(+) = (6R)-5,10-methenyltetrahydrofolate + NADPH. It catalyses the reaction (6R)-5,10-methenyltetrahydrofolate + H2O = (6R)-10-formyltetrahydrofolate + H(+). The protein operates within one-carbon metabolism; tetrahydrofolate interconversion. Catalyzes the oxidation of 5,10-methylenetetrahydrofolate to 5,10-methenyltetrahydrofolate and then the hydrolysis of 5,10-methenyltetrahydrofolate to 10-formyltetrahydrofolate. In Trichodesmium erythraeum (strain IMS101), this protein is Bifunctional protein FolD.